The following is a 176-amino-acid chain: Large ribosomal subunit protein uL10 (176 aa).

The protein belongs to the universal ribosomal protein uL10 family. In terms of assembly, part of the ribosomal stalk of the 50S ribosomal subunit. The N-terminus interacts with L11 and the large rRNA to form the base of the stalk. The C-terminus forms an elongated spine to which L12 dimers bind in a sequential fashion forming a multimeric L10(L12)X complex.

Its function is as follows. Forms part of the ribosomal stalk, playing a central role in the interaction of the ribosome with GTP-bound translation factors. This Streptomyces coelicolor (strain ATCC BAA-471 / A3(2) / M145) protein is Large ribosomal subunit protein uL10 (rplJ).